A 256-amino-acid polypeptide reads, in one-letter code: Adenosylcobinamide-GDP ribazoletransferase (256 aa).

The next 6 helical transmembrane spans lie at 40-60 (YFPLIGWLVGAVAAAVYWLVL), 64-84 (PAQGVAVAVSMGATLLLTGAF), 114-134 (IGAFGAIAVCMALLLKWQLLS), 143-163 (ILVAMVAAHAASRAAAVSHLL), 194-214 (VVPLLWFGPMCAALIVVGLIL), and 234-254 (CLGMAQQIFELLILWGLLAWM).

The protein belongs to the CobS family. It depends on Mg(2+) as a cofactor.

Its subcellular location is the cell inner membrane. The enzyme catalyses alpha-ribazole + adenosylcob(III)inamide-GDP = adenosylcob(III)alamin + GMP + H(+). It carries out the reaction alpha-ribazole 5'-phosphate + adenosylcob(III)inamide-GDP = adenosylcob(III)alamin 5'-phosphate + GMP + H(+). It participates in cofactor biosynthesis; adenosylcobalamin biosynthesis; adenosylcobalamin from cob(II)yrinate a,c-diamide: step 7/7. Its function is as follows. Joins adenosylcobinamide-GDP and alpha-ribazole to generate adenosylcobalamin (Ado-cobalamin). Also synthesizes adenosylcobalamin 5'-phosphate from adenosylcobinamide-GDP and alpha-ribazole 5'-phosphate. The protein is Adenosylcobinamide-GDP ribazoletransferase of Ralstonia pickettii (strain 12J).